Reading from the N-terminus, the 389-residue chain is Succinate--CoA ligase [ADP-forming] subunit beta (389 aa).

The region spanning 9–244 (KQLFAEYGLP…PSQEDEREAH (236 aa)) is the ATP-grasp domain. ATP-binding positions include Lys46, 53-55 (GRG), Glu99, Thr102, and Glu107. Mg(2+)-binding residues include Asn199 and Asp213. Residues Asn264 and 321–323 (GIV) each bind substrate.

The protein belongs to the succinate/malate CoA ligase beta subunit family. As to quaternary structure, heterotetramer of two alpha and two beta subunits. Mg(2+) is required as a cofactor.

The catalysed reaction is succinate + ATP + CoA = succinyl-CoA + ADP + phosphate. The enzyme catalyses GTP + succinate + CoA = succinyl-CoA + GDP + phosphate. Its pathway is carbohydrate metabolism; tricarboxylic acid cycle; succinate from succinyl-CoA (ligase route): step 1/1. Functionally, succinyl-CoA synthetase functions in the citric acid cycle (TCA), coupling the hydrolysis of succinyl-CoA to the synthesis of either ATP or GTP and thus represents the only step of substrate-level phosphorylation in the TCA. The beta subunit provides nucleotide specificity of the enzyme and binds the substrate succinate, while the binding sites for coenzyme A and phosphate are found in the alpha subunit. The polypeptide is Succinate--CoA ligase [ADP-forming] subunit beta (Teredinibacter turnerae (strain ATCC 39867 / T7901)).